Here is a 318-residue protein sequence, read N- to C-terminus: MRHLLSTRDLSRDEAVHILDVAEDMADVGTREIKKTPALRGRTVVNLFFEDSTRTRISFEAAAKRLSADVINFSAKGSSVSKGESLKDTAQTLQAMGADGVVVRHPSSGAPHTLAGSGWIDAGIVNAGDGTHEHPTQALLDAFTIRRRLHGTAARGKGLDGTRVVIVGDVLHSRVARSNAWLLTTLGAEVTLVAPPTLVPVGVGSWPVTVRYDLDAALAEGKPDAVMMLRIQAERMRAAFFPNPCEYARIWGLDDARLALLGPDTIVMHPGPMNRGLEISAAAADSERSTVREQVANGVSVRMAVLYLLLSGDGKADR.

Carbamoyl phosphate is bound by residues Arg54 and Thr55. Lys82 serves as a coordination point for L-aspartate. Carbamoyl phosphate contacts are provided by Arg104, His134, and Gln137. Residues Arg174 and Arg230 each coordinate L-aspartate. Positions 271 and 272 each coordinate carbamoyl phosphate.

Belongs to the aspartate/ornithine carbamoyltransferase superfamily. ATCase family. Heterododecamer (2C3:3R2) of six catalytic PyrB chains organized as two trimers (C3), and six regulatory PyrI chains organized as three dimers (R2).

It catalyses the reaction carbamoyl phosphate + L-aspartate = N-carbamoyl-L-aspartate + phosphate + H(+). It functions in the pathway pyrimidine metabolism; UMP biosynthesis via de novo pathway; (S)-dihydroorotate from bicarbonate: step 2/3. Catalyzes the condensation of carbamoyl phosphate and aspartate to form carbamoyl aspartate and inorganic phosphate, the committed step in the de novo pyrimidine nucleotide biosynthesis pathway. The polypeptide is Aspartate carbamoyltransferase catalytic subunit (Clavibacter michiganensis subsp. michiganensis (strain NCPPB 382)).